A 224-amino-acid chain; its full sequence is Dehydration-responsive element-binding protein 1G (224 aa).

Residues 1-16 (MDVSAALSSDYSSGTP) are compositionally biased toward polar residues. The disordered stretch occupies residues 1-46 (MDVSAALSSDYSSGTPSPVAADADDGSSAYMTVSSAPPKRRAGRTK). Positions 54–111 (VFKGVRRRNPGRWVCEVREPHGKQRIWLGTFETAEMAARAHDVAALALRGRAACLNFA) form a DNA-binding region, AP2/ERF. Disordered regions lie at residues 139–161 (AFRPPPDESNAATEVAAAASGAT) and 200–224 (PPMAGDPAVGSGEDDNDGEVQLWSY).

This sequence belongs to the AP2/ERF transcription factor family. ERF subfamily.

The protein localises to the nucleus. Functionally, transcriptional activator that binds specifically to the DNA sequence 5'-[AG]CCGAC-3'. Binding to the C-repeat/DRE element mediates high salinity- and dehydration-inducible transcription. The protein is Dehydration-responsive element-binding protein 1G (DREB1G) of Oryza sativa subsp. japonica (Rice).